The following is a 612-amino-acid chain: Glutamine--fructose-6-phosphate aminotransferase [isomerizing] (612 aa).

C2 acts as the Nucleophile; for GATase activity in catalysis. The region spanning 2–221 (CGIVGIVSQR…NGDIAEITNS (220 aa)) is the Glutamine amidotransferase type-2 domain. 2 consecutive SIS domains span residues 289–429 (FNKT…IRKI) and 461–602 (LVKN…VDHP). Residue K607 is the For Fru-6P isomerization activity of the active site.

Homodimer.

The protein localises to the cytoplasm. The catalysed reaction is D-fructose 6-phosphate + L-glutamine = D-glucosamine 6-phosphate + L-glutamate. Catalyzes the first step in hexosamine metabolism, converting fructose-6P into glucosamine-6P using glutamine as a nitrogen source. The polypeptide is Glutamine--fructose-6-phosphate aminotransferase [isomerizing] (Wigglesworthia glossinidia brevipalpis).